The following is a 162-amino-acid chain: Peptide deformylase-like (162 aa).

This sequence belongs to the polypeptide deformylase family.

The protein is Peptide deformylase-like of Staphylococcus aureus (strain COL).